Reading from the N-terminus, the 88-residue chain is MLKLICIVFLVTVLTFVVGEDTLDPAEYGCPSDVDMAELTEKNEVCLRCEDFHKEGVAFTLCKTNCFTTEYYKNCVKDLEEAGKETEE.

The signal sequence occupies residues 1–19 (MLKLICIVFLVTVLTFVVG). Cystine bridges form between Cys-30-Cys-66, Cys-46-Cys-62, and Cys-49-Cys-75.

It belongs to the arthropod CHH/MIH/GIH/VIH hormone family. As to expression, expressed by the venom gland.

Its subcellular location is the secreted. Its function is as follows. May increase the toxicity of alpha-latrotoxin and/or other venom components. Is non-toxic to mice and to the cockroach Periplaneta americana. This Latrodectus geometricus (Brown widow spider) protein is Alpha-latrotoxin associated low molecular weight protein 2.